A 264-amino-acid chain; its full sequence is tRNA (guanine-N(1)-)-methyltransferase (264 aa).

S-adenosyl-L-methionine-binding positions include Gly-125 and 145 to 150 (LGDFVL).

It belongs to the RNA methyltransferase TrmD family. Homodimer.

The protein resides in the cytoplasm. It carries out the reaction guanosine(37) in tRNA + S-adenosyl-L-methionine = N(1)-methylguanosine(37) in tRNA + S-adenosyl-L-homocysteine + H(+). Its function is as follows. Specifically methylates guanosine-37 in various tRNAs. The polypeptide is tRNA (guanine-N(1)-)-methyltransferase (Burkholderia ambifaria (strain MC40-6)).